Consider the following 169-residue polypeptide: ATP synthase subunit b (169 aa).

The helical transmembrane segment at 12–32 (HIYLGNAIWYLLCFAILMLLI) threads the bilayer.

This sequence belongs to the ATPase B chain family. In terms of assembly, F-type ATPases have 2 components, F(1) - the catalytic core - and F(0) - the membrane proton channel. F(1) has five subunits: alpha(3), beta(3), gamma(1), delta(1), epsilon(1). F(0) has three main subunits: a(1), b(2) and c(10-14). The alpha and beta chains form an alternating ring which encloses part of the gamma chain. F(1) is attached to F(0) by a central stalk formed by the gamma and epsilon chains, while a peripheral stalk is formed by the delta and b chains.

It is found in the cell membrane. Increases 2-fold following exposure to low pH. Functionally, f(1)F(0) ATP synthase produces ATP from ADP in the presence of a proton or sodium gradient. F-type ATPases consist of two structural domains, F(1) containing the extramembraneous catalytic core and F(0) containing the membrane proton channel, linked together by a central stalk and a peripheral stalk. During catalysis, ATP synthesis in the catalytic domain of F(1) is coupled via a rotary mechanism of the central stalk subunits to proton translocation. Component of the F(0) channel, it forms part of the peripheral stalk, linking F(1) to F(0). The polypeptide is ATP synthase subunit b (Lactobacillus acidophilus (strain ATCC 700396 / NCK56 / N2 / NCFM)).